The primary structure comprises 162 residues: UPF0460 protein y4vQ (162 aa).

This sequence belongs to the UPF0460 family.

The polypeptide is UPF0460 protein y4vQ (Sinorhizobium fredii (strain NBRC 101917 / NGR234)).